The following is a 445-amino-acid chain: Trigger factor (445 aa).

Residues 162 to 247 enclose the PPIase FKBP-type domain; sequence GDQVTIDAIG…IKAVHTAEPT (86 aa).

Belongs to the FKBP-type PPIase family. Tig subfamily.

The protein localises to the cytoplasm. The enzyme catalyses [protein]-peptidylproline (omega=180) = [protein]-peptidylproline (omega=0). Functionally, involved in protein export. Acts as a chaperone by maintaining the newly synthesized protein in an open conformation. Functions as a peptidyl-prolyl cis-trans isomerase. The chain is Trigger factor from Rickettsia akari (strain Hartford).